A 188-amino-acid polypeptide reads, in one-letter code: dCTP deaminase (188 aa).

Residues 111-116 (KSTYAR), 135-137 (TLE), Q156, Y170, and Q180 contribute to the dCTP site. The active-site Proton donor/acceptor is E137.

This sequence belongs to the dCTP deaminase family. Homotrimer.

The enzyme catalyses dCTP + H2O + H(+) = dUTP + NH4(+). It participates in pyrimidine metabolism; dUMP biosynthesis; dUMP from dCTP (dUTP route): step 1/2. Its function is as follows. Catalyzes the deamination of dCTP to dUTP. This chain is dCTP deaminase, found in Pseudomonas putida (strain W619).